Reading from the N-terminus, the 449-residue chain is Protein tweety homolog 1-A (449 aa).

Topologically, residues 1-43 are extracellular; it reads MSTSHGYRASWWTNILHQVPHTNFQFEVVDNQFAPQEWPYQQA. Residues 44-64 form a helical membrane-spanning segment; sequence LLFLASIAGLCLAISLILICV. Topologically, residues 65–86 are cytoplasmic; it reads YLIRFCCCASQEDDDSKNHRVC. A helical transmembrane segment spans residues 87–107; that stretch reads CVTWSCVAAVIICCAGIGIGF. Residues 108-212 lie on the Extracellular side of the membrane; that stretch reads YGNSETNDGV…QVNFIEDYRW (105 aa). A glycan (N-linked (GlcNAc...) asparagine) is linked at N128. The helical transmembrane segment at 213–233 threads the bilayer; sequence LAYILLLLLDLIICLFTLLGL. The Cytoplasmic segment spans residues 234–238; it reads AKRIK. A helical membrane pass occupies residues 239 to 259; the sequence is WLVIVMTVVSFFVLLLSWGSM. Residues 260 to 388 are Extracellular-facing; it reads GLEMATAVGL…LKGLCYDGME (129 aa). Cystine bridges form between C273-C383 and C301-C368. 2 N-linked (GlcNAc...) asparagine glycosylation sites follow: N282 and N353. Residues 389 to 409 traverse the membrane as a helical segment; sequence GILFLLLFSFLSALSFTAAVC. Residues 410-449 lie on the Cytoplasmic side of the membrane; sequence SLPRAWKRFQNRDLDYDDMDEDDPFNPQESKRFVQWQSSI.

Belongs to the tweety family. As to quaternary structure, homotetramer; disulfide-linked. Homodimer.

The protein resides in the cell membrane. It catalyses the reaction chloride(in) = chloride(out). It carries out the reaction L-glutamate(out) = L-glutamate(in). In terms of biological role, may act as a calcium-independent, swelling-dependent volume-regulated anion channel (VRAC-swell) which plays a pivotal role in the process of regulatory volume decrease (RVD) in the brain through the efflux of anions like chloride and organic osmolytes like glutamate. This is Protein tweety homolog 1-A (ttyh1-a) from Xenopus laevis (African clawed frog).